We begin with the raw amino-acid sequence, 60 residues long: uncharacterized protein (60 aa).

A disordered region spans residues 27–50 (VKNNNNNNNNNNNNNNNNNNNNNK). Residues 29–49 (NNNNNNNNNNNNNNNNNNNNN) show a composition bias toward low complexity.

This is an uncharacterized protein from Dictyostelium discoideum (Social amoeba).